The following is a 37-amino-acid chain: Small ribosomal subunit protein uS19 (37 aa).

The protein belongs to the universal ribosomal protein uS19 family.

The chain is Small ribosomal subunit protein uS19 (RPS15) from Helix lucorum (Snail).